Here is a 96-residue protein sequence, read N- to C-terminus: Small ribosomal subunit protein bS6 (96 aa).

This sequence belongs to the bacterial ribosomal protein bS6 family.

Its function is as follows. Binds together with bS18 to 16S ribosomal RNA. The polypeptide is Small ribosomal subunit protein bS6 (rpsF) (Streptomyces coelicolor (strain ATCC BAA-471 / A3(2) / M145)).